A 267-amino-acid chain; its full sequence is Ras-related protein Rab-36 (267 aa).

8 residues coordinate GTP: Val68, Gly69, Lys70, Thr71, Ser72, Asp83, Tyr86, and Thr89. Residue Thr71 coordinates Mg(2+). Positions Arg76–Phe94 match the Switch 1 motif. Positions 89 and 112 each coordinate Mg(2+). Positions Thr113–Val132 match the Switch 2 motif. GTP is bound by residues Gly115, Lys172, Asp174, Ser203, Ala204, and Lys205. A disordered region spans residues Gly243–Cys267. S-geranylgeranyl cysteine attachment occurs at residues Cys266 and Cys267.

The protein belongs to the small GTPase superfamily. Rab family. Mg(2+) is required as a cofactor. Ubiquitously present in all tissues examined.

The protein localises to the golgi apparatus membrane. The enzyme catalyses GTP + H2O = GDP + phosphate + H(+). Regulated by guanine nucleotide exchange factors (GEFs) which promote the exchange of bound GDP for free GTP. Regulated by GTPase activating proteins (GAPs) which increase the GTP hydrolysis activity. Inhibited by GDP dissociation inhibitors (GDIs). In terms of biological role, the small GTPases Rab are key regulators of intracellular membrane trafficking, from the formation of transport vesicles to their fusion with membranes. Rabs cycle between an inactive GDP-bound form and an active GTP-bound form that is able to recruit to membranes different sets of downstream effectors directly responsible for vesicle formation, movement, tethering and fusion. In Homo sapiens (Human), this protein is Ras-related protein Rab-36.